A 352-amino-acid chain; its full sequence is 3-dehydroquinate synthase (352 aa).

NAD(+)-binding positions include 60 to 65 (DGEGAK), 118 to 119 (TT), K131, K140, and 158 to 161 (FLET). E173, H237, and H253 together coordinate Zn(2+).

It belongs to the sugar phosphate cyclases superfamily. Dehydroquinate synthase family. NAD(+) serves as cofactor. Co(2+) is required as a cofactor. It depends on Zn(2+) as a cofactor.

The protein resides in the cytoplasm. The catalysed reaction is 7-phospho-2-dehydro-3-deoxy-D-arabino-heptonate = 3-dehydroquinate + phosphate. Its pathway is metabolic intermediate biosynthesis; chorismate biosynthesis; chorismate from D-erythrose 4-phosphate and phosphoenolpyruvate: step 2/7. Its function is as follows. Catalyzes the conversion of 3-deoxy-D-arabino-heptulosonate 7-phosphate (DAHP) to dehydroquinate (DHQ). This chain is 3-dehydroquinate synthase, found in Sulfurisphaera tokodaii (strain DSM 16993 / JCM 10545 / NBRC 100140 / 7) (Sulfolobus tokodaii).